A 545-amino-acid chain; its full sequence is Esterase-5C (545 aa).

The N-terminal stretch at 1–19 is a signal peptide; that stretch reads MLAARLIILLSFYWLSASA. A disulfide bridge connects residues cysteine 84 and cysteine 103. Asparagine 113 carries N-linked (GlcNAc...) asparagine glycosylation. Serine 207 (acyl-ester intermediate) is an active-site residue. Cysteine 259 and cysteine 271 are joined by a disulfide. Asparagine 421 is a glycosylation site (N-linked (GlcNAc...) asparagine). Residue histidine 467 is the Charge relay system of the active site. N-linked (GlcNAc...) asparagine glycosylation is present at asparagine 507. Cysteines 515 and 536 form a disulfide.

The protein belongs to the type-B carboxylesterase/lipase family.

Its subcellular location is the secreted. It catalyses the reaction a carboxylic ester + H2O = an alcohol + a carboxylate + H(+). In Drosophila pseudoobscura pseudoobscura (Fruit fly), this protein is Esterase-5C (Est-5C).